The chain runs to 57 residues: Ribosome modulation factor (57 aa).

The interval M1–E28 is disordered.

This sequence belongs to the ribosome modulation factor family.

Its subcellular location is the cytoplasm. In terms of biological role, during stationary phase, converts 70S ribosomes to an inactive dimeric form (100S ribosomes). The chain is Ribosome modulation factor from Vibrio cholerae serotype O1 (strain MJ-1236).